A 431-amino-acid chain; its full sequence is tRNA(Ile)-lysidine synthase (431 aa).

Residue 25 to 30 (SGGLDS) participates in ATP binding.

The protein belongs to the tRNA(Ile)-lysidine synthase family.

The protein localises to the cytoplasm. The catalysed reaction is cytidine(34) in tRNA(Ile2) + L-lysine + ATP = lysidine(34) in tRNA(Ile2) + AMP + diphosphate + H(+). Its function is as follows. Ligates lysine onto the cytidine present at position 34 of the AUA codon-specific tRNA(Ile) that contains the anticodon CAU, in an ATP-dependent manner. Cytidine is converted to lysidine, thus changing the amino acid specificity of the tRNA from methionine to isoleucine. This chain is tRNA(Ile)-lysidine synthase, found in Legionella pneumophila (strain Paris).